Reading from the N-terminus, the 464-residue chain is 3-ketoacyl-CoA synthase 19 (464 aa).

A helical membrane pass occupies residues 3–25 (LFSLSSLLLLSTLFVFYIFKFVF). One can recognise an FAE domain in the interval 24 to 318 (VFKRRNQRNC…AIVRALKRRT (295 aa)). Active-site residues include C172, H251, H339, H343, H372, and N376.

It belongs to the thiolase-like superfamily. Chalcone/stilbene synthases family. Expressed in siliques.

It is found in the membrane. The catalysed reaction is a very-long-chain acyl-CoA + malonyl-CoA + H(+) = a very-long-chain 3-oxoacyl-CoA + CO2 + CoA. It participates in lipid metabolism; fatty acid biosynthesis. This Arabidopsis thaliana (Mouse-ear cress) protein is 3-ketoacyl-CoA synthase 19.